The chain runs to 356 residues: L-lactate dehydrogenase A (356 aa).

Residues 75–80 (DALPDK) and arginine 121 each bind NAD(+). Residues arginine 128, asparagine 160, and arginine 191 each coordinate substrate. Asparagine 160 is a binding site for NAD(+). Histidine 215 functions as the Proton acceptor in the catalytic mechanism. Threonine 270 provides a ligand contact to substrate.

Belongs to the LDH/MDH superfamily. LDH family. Tetramer that arise from random association of LDH-A and LDH-B.

It catalyses the reaction (S)-lactate + NAD(+) = pyruvate + NADH + H(+). Its pathway is fermentation; pyruvate fermentation to lactate; (S)-lactate from pyruvate: step 1/1. This is L-lactate dehydrogenase A from Hordeum vulgare (Barley).